Consider the following 192-residue polypeptide: UPF0312 protein Spro_1887 (192 aa).

The first 23 residues, 1–23 (MLKKTVLGLTAGAMLLSAGSALA), serve as a signal peptide directing secretion.

This sequence belongs to the UPF0312 family. Type 1 subfamily.

It localises to the periplasm. This is UPF0312 protein Spro_1887 from Serratia proteamaculans (strain 568).